The sequence spans 221 residues: UPF0319 protein CGSHiGG_02140 (221 aa).

The signal sequence occupies residues Met-1 to Ala-21.

Belongs to the UPF0319 family.

The protein is UPF0319 protein CGSHiGG_02140 of Haemophilus influenzae (strain PittGG).